A 255-amino-acid chain; its full sequence is Imidazole glycerol phosphate synthase subunit HisF (255 aa).

Active-site residues include Asp-12 and Asp-131.

This sequence belongs to the HisA/HisF family. As to quaternary structure, heterodimer of HisH and HisF.

It localises to the cytoplasm. It catalyses the reaction 5-[(5-phospho-1-deoxy-D-ribulos-1-ylimino)methylamino]-1-(5-phospho-beta-D-ribosyl)imidazole-4-carboxamide + L-glutamine = D-erythro-1-(imidazol-4-yl)glycerol 3-phosphate + 5-amino-1-(5-phospho-beta-D-ribosyl)imidazole-4-carboxamide + L-glutamate + H(+). It functions in the pathway amino-acid biosynthesis; L-histidine biosynthesis; L-histidine from 5-phospho-alpha-D-ribose 1-diphosphate: step 5/9. IGPS catalyzes the conversion of PRFAR and glutamine to IGP, AICAR and glutamate. The HisF subunit catalyzes the cyclization activity that produces IGP and AICAR from PRFAR using the ammonia provided by the HisH subunit. This chain is Imidazole glycerol phosphate synthase subunit HisF, found in Salinispora tropica (strain ATCC BAA-916 / DSM 44818 / JCM 13857 / NBRC 105044 / CNB-440).